Here is a 234-residue protein sequence, read N- to C-terminus: MSDAANPEGHKRSLPGRPPGIRADSSGLTDRQRRVIEVIRDSVQRRGYPPSMREIGQAVGLSSTSSVAHQLMALERKGFLRRDPHRPRAYEVRGSDQAASVQPTDTAGKPAASYVPLVGRIAAGGPILAEESVEDVFPLPRQLVGDGELFVLKVVGDSMIEAAICDGDWVTVRRQPVAENGDIVAAMLDGEATVKRFKREDGHVWLLPHNSAYEPIPGDDATILGKVVAVLRRV.

Residues 1-29 form a disordered region; sequence MSDAANPEGHKRSLPGRPPGIRADSSGLT. Positions 52–72 form a DNA-binding region, H-T-H motif; sequence MREIGQAVGLSSTSSVAHQLM. The segment at 90–109 is disordered; the sequence is YEVRGSDQAASVQPTDTAGK. Active-site for autocatalytic cleavage activity residues include Ser158 and Lys195.

The protein belongs to the peptidase S24 family. As to quaternary structure, homodimer.

It carries out the reaction Hydrolysis of Ala-|-Gly bond in repressor LexA.. Its function is as follows. Represses a number of genes involved in the response to DNA damage (SOS response), including recA and lexA. In the presence of single-stranded DNA, RecA interacts with LexA causing an autocatalytic cleavage which disrupts the DNA-binding part of LexA, leading to derepression of the SOS regulon and eventually DNA repair. This Streptomyces coelicolor (strain ATCC BAA-471 / A3(2) / M145) protein is LexA repressor.